The chain runs to 205 residues: Holliday junction branch migration complex subunit RuvA (205 aa).

Residues Met-1 to Arg-64 are domain I. The segment at Ser-65–Ile-143 is domain II. The interval Arg-144–Arg-152 is flexible linker. The segment at Thr-153–Arg-205 is domain III.

The protein belongs to the RuvA family. Homotetramer. Forms an RuvA(8)-RuvB(12)-Holliday junction (HJ) complex. HJ DNA is sandwiched between 2 RuvA tetramers; dsDNA enters through RuvA and exits via RuvB. An RuvB hexamer assembles on each DNA strand where it exits the tetramer. Each RuvB hexamer is contacted by two RuvA subunits (via domain III) on 2 adjacent RuvB subunits; this complex drives branch migration. In the full resolvosome a probable DNA-RuvA(4)-RuvB(12)-RuvC(2) complex forms which resolves the HJ.

It is found in the cytoplasm. In terms of biological role, the RuvA-RuvB-RuvC complex processes Holliday junction (HJ) DNA during genetic recombination and DNA repair, while the RuvA-RuvB complex plays an important role in the rescue of blocked DNA replication forks via replication fork reversal (RFR). RuvA specifically binds to HJ cruciform DNA, conferring on it an open structure. The RuvB hexamer acts as an ATP-dependent pump, pulling dsDNA into and through the RuvAB complex. HJ branch migration allows RuvC to scan DNA until it finds its consensus sequence, where it cleaves and resolves the cruciform DNA. The polypeptide is Holliday junction branch migration complex subunit RuvA (Methylobacterium nodulans (strain LMG 21967 / CNCM I-2342 / ORS 2060)).